A 399-amino-acid polypeptide reads, in one-letter code: Rho GTPase-activating protein gacC (399 aa).

Over residues 1–13 (MESKDQNVYRKGS) the composition is skewed to basic and acidic residues. The disordered stretch occupies residues 1-80 (MESKDQNVYR…SSSTSTTPVK (80 aa)). Positions 14 to 31 (DNFSKGSNTFFGNLKSIS) are enriched in polar residues. Low complexity predominate over residues 61–79 (SVDSSSSNPSSSSTSTTPV). The 190-residue stretch at 186-375 (VELEESFKTA…NLISFFQQIF (190 aa)) folds into the Rho-GAP domain.

The protein localises to the cytoplasm. Functionally, rho GTPase-activating protein involved in the signal transduction pathway. The chain is Rho GTPase-activating protein gacC (gacC) from Dictyostelium discoideum (Social amoeba).